A 418-amino-acid chain; its full sequence is Galactooligosaccharides transport system permease protein GanP (418 aa).

The next 9 helical transmembrane spans lie at 25-45 (IKGI…GDLL), 65-85 (VFLL…LAVY), 129-149 (LFIL…LAFT), 191-211 (VVWT…LAII), 226-246 (ILIL…AGLF), 279-299 (LILM…TGVL), 323-343 (YITL…QFTF), 357-379 (GGPA…IYKL), and 388-408 (LAAA…LWQF). Positions 187–407 (LAWTVVWTLA…VFVISIALWQ (221 aa)) constitute an ABC transmembrane type-1 domain.

This sequence belongs to the binding-protein-dependent transport system permease family. In terms of assembly, the complex is composed of two ATP-binding proteins (MsmX), two transmembrane proteins (GanP and GanQ) and a solute-binding protein (GanS).

It is found in the cell membrane. Functionally, involved in galactan degradation. Part of the ABC transporter complex GanPQS involved in the uptake of galactooligosaccharides. Responsible for the translocation of the substrate across the membrane. This is Galactooligosaccharides transport system permease protein GanP (ganP) from Bacillus subtilis (strain 168).